Here is a 225-residue protein sequence, read N- to C-terminus: Uracil-DNA glycosylase (225 aa).

The active-site Proton acceptor is aspartate 65.

Belongs to the uracil-DNA glycosylase (UDG) superfamily. UNG family.

The protein localises to the cytoplasm. It carries out the reaction Hydrolyzes single-stranded DNA or mismatched double-stranded DNA and polynucleotides, releasing free uracil.. Excises uracil residues from the DNA which can arise as a result of misincorporation of dUMP residues by DNA polymerase or due to deamination of cytosine. This is Uracil-DNA glycosylase from Bacillus cereus (strain AH820).